The following is a 327-amino-acid chain: Annexin A8 (327 aa).

4 Annexin repeats span residues 21 to 92 (FNPD…ALMY), 93 to 164 (PPYS…CLLQ), 177 to 249 (GLVL…TVVK), and 253 to 324 (NVHS…NLVG). Residues Met-266, Gly-268, Gly-270, and Asp-310 each coordinate Ca(2+).

Belongs to the annexin family.

In terms of biological role, this protein is an anticoagulant protein that acts as an indirect inhibitor of the thromboplastin-specific complex, which is involved in the blood coagulation cascade. The protein is Annexin A8 (Anxa8) of Mus musculus (Mouse).